The chain runs to 367 residues: Nuclear hormone receptor-like 1 (367 aa).

The segment at residues 32 to 107 (GQPCVVCGDD…NGMTKSLVLN (76 aa)) is a DNA-binding region (nuclear receptor). 2 NR C4-type zinc fingers span residues 35–55 (CVVCGDDATGLHYRAITCEGC) and 71–95 (CKSIERCEISKISRNICQFCRFQKC). Residues 145–367 (EFQSRIDQVT…IANILLFKFT (223 aa)) enclose the NR LBD domain.

The protein belongs to the nuclear hormone receptor family.

Its subcellular location is the nucleus. The chain is Nuclear hormone receptor-like 1 (nhr-1) from Onchocerca volvulus.